Here is a 498-residue protein sequence, read N- to C-terminus: ATP synthase subunit beta, chloroplastic (498 aa).

172–179 (GGAGVGKT) lines the ATP pocket.

This sequence belongs to the ATPase alpha/beta chains family. In terms of assembly, F-type ATPases have 2 components, CF(1) - the catalytic core - and CF(0) - the membrane proton channel. CF(1) has five subunits: alpha(3), beta(3), gamma(1), delta(1), epsilon(1). CF(0) has four main subunits: a(1), b(1), b'(1) and c(9-12).

Its subcellular location is the plastid. It localises to the chloroplast thylakoid membrane. The catalysed reaction is ATP + H2O + 4 H(+)(in) = ADP + phosphate + 5 H(+)(out). In terms of biological role, produces ATP from ADP in the presence of a proton gradient across the membrane. The catalytic sites are hosted primarily by the beta subunits. The polypeptide is ATP synthase subunit beta, chloroplastic (Populus trichocarpa (Western balsam poplar)).